The following is a 129-amino-acid chain: Tumor necrosis factor receptor superfamily member 12A (129 aa).

The signal sequence occupies residues 1-27; the sequence is MARGSLRRLLRLLVLGLWLALLRSVAG. Residues 28 to 80 are Extracellular-facing; it reads EQAPGTAPCSRGSSWSADLDKCMDCASCRARPHSDFCLGCAAAPPAPFRLLWP. Intrachain disulfides connect Cys-36-Cys-49, Cys-52-Cys-67, and Cys-55-Cys-64. A TNFR-Cys; atypical repeat occupies 36 to 67; that stretch reads CSRGSSWSADLDKCMDCASCRARPHSDFCLGC. Residues 81–101 form a helical membrane-spanning segment; the sequence is ILGGALSLTFVLGLLSGFLVW. The Cytoplasmic segment spans residues 102–129; the sequence is RRCRRREKFTTPIEETGGEGCPAVALIQ.

In terms of assembly, associates with TRAF1 and TRAF2, and probably also with TRAF3. In terms of tissue distribution, highly expressed in heart, placenta and kidney. Intermediate expression in lung, skeletal muscle and pancreas.

The protein localises to the membrane. Receptor for TNFSF12/TWEAK. Weak inducer of apoptosis in some cell types. Promotes angiogenesis and the proliferation of endothelial cells. May modulate cellular adhesion to matrix proteins. This Homo sapiens (Human) protein is Tumor necrosis factor receptor superfamily member 12A (TNFRSF12A).